Reading from the N-terminus, the 118-residue chain is Large ribosomal subunit protein bL20 (118 aa).

This sequence belongs to the bacterial ribosomal protein bL20 family.

In terms of biological role, binds directly to 23S ribosomal RNA and is necessary for the in vitro assembly process of the 50S ribosomal subunit. It is not involved in the protein synthesizing functions of that subunit. In Lactobacillus johnsonii (strain CNCM I-12250 / La1 / NCC 533), this protein is Large ribosomal subunit protein bL20.